Consider the following 312-residue polypeptide: tRNA dimethylallyltransferase (312 aa).

ATP is bound at residue 15-22 (GPTAAGKS). Residue 17–22 (TAAGKS) coordinates substrate. Residues 40 to 43 (DSMQ) form an interaction with substrate tRNA region.

Belongs to the IPP transferase family. In terms of assembly, monomer. The cofactor is Mg(2+).

The enzyme catalyses adenosine(37) in tRNA + dimethylallyl diphosphate = N(6)-dimethylallyladenosine(37) in tRNA + diphosphate. Functionally, catalyzes the transfer of a dimethylallyl group onto the adenine at position 37 in tRNAs that read codons beginning with uridine, leading to the formation of N6-(dimethylallyl)adenosine (i(6)A). This is tRNA dimethylallyltransferase from Streptomyces coelicolor (strain ATCC BAA-471 / A3(2) / M145).